A 268-amino-acid polypeptide reads, in one-letter code: Octanoyltransferase (268 aa).

The BPL/LPL catalytic domain occupies 49-237 (GTQGDVILVV…ALLKALSGEL (189 aa)). Residues 87 to 94 (RGGRITWH), 167 to 169 (ALG), and 180 to 182 (GLA) each bind substrate. Cysteine 198 acts as the Acyl-thioester intermediate in catalysis.

It belongs to the LipB family.

It is found in the cytoplasm. The enzyme catalyses octanoyl-[ACP] + L-lysyl-[protein] = N(6)-octanoyl-L-lysyl-[protein] + holo-[ACP] + H(+). It participates in protein modification; protein lipoylation via endogenous pathway; protein N(6)-(lipoyl)lysine from octanoyl-[acyl-carrier-protein]: step 1/2. Catalyzes the transfer of endogenously produced octanoic acid from octanoyl-acyl-carrier-protein onto the lipoyl domains of lipoate-dependent enzymes. Lipoyl-ACP can also act as a substrate although octanoyl-ACP is likely to be the physiological substrate. The sequence is that of Octanoyltransferase from Corynebacterium aurimucosum (strain ATCC 700975 / DSM 44827 / CIP 107346 / CN-1) (Corynebacterium nigricans).